We begin with the raw amino-acid sequence, 110 residues long: MSPRKTYILKLYVAGNTPNSMRALKTLRNILETEFLGVYALKVIDVLKQPQLAEEDKILATPTLAKILPPPVRRIIGDLSDRERVLIGLDLLYEELSDDSNAQVLDDFSE.

The protein belongs to the KaiB family. In terms of assembly, the KaiABC complex composition changes during the circadian cycle to control KaiC phosphorylation. Complexes KaiC(6), KaiA(2-4):KaiC(6), KaiB(6):KaiC(6) and KaiC(6):KaiB(6):KaiA(12) are among the most important forms, many form cooperatively. Undergoes a major conformational rearrangment; in the free state forms homotetramers as a dimer of dimers. When bound to the CI domain of KaiC switches to a monomeric thioredoxin-fold (KaiB(fs)). KaiB(fs) binds CikA, leading it to dephosphorylate phospho-RpaA.

Key component of the KaiABC oscillator complex, which constitutes the main circadian regulator in cyanobacteria. Complex composition changes during the circadian cycle to control KaiC phosphorylation. KaiA stimulates KaiC autophosphorylation, while KaiB sequesters KaiA, leading to KaiC autodephosphorylation. Phospho-Ser-431 KaiC accumulation triggers binding of KaiB to form the KaiB(6):KaiC(6) complex, leading to changes in output regulators CikA and SasA. KaiB switches to a thioredoxin-like fold (KaiB(fs)) when bound to KaiC. KaiB(6):KaiC(6) formation exposes a site for KaiA binding that sequesters KaiA from KaiC, making the KaiC(6):KaiB(6):KaiA(12) complex that results in KaiC autodephosphorylation. Its function is as follows. A metamorphic protein which reversibly switches between an inactive tetrameric fold and a rare, thioredoxin-like monomeric fold (KaiB(fs)). KaiB(fs) binds phospho-KaiC, KaiA and CikA. KaiA and CikA compete for binding to KaiB(fs), and KaiB(fs) and SasA compete for binding to KaiC, thus the clock oscillator and output signal pathway are tightly coupled. The protein is Circadian clock oscillator protein KaiB of Synechococcus sp. (strain RCC307).